A 94-amino-acid chain; its full sequence is MIKSELVQIIASRNPHLFQRDVVNIVGAVFDEITNALAEGNRVELRGFGAFSVKNRPARSGRNPRTGETVDVEEKWVPFFKTGKKLRDRLNGAV.

This sequence belongs to the bacterial histone-like protein family. As to quaternary structure, heterodimer of an alpha and a beta chain.

Functionally, this protein is one of the two subunits of integration host factor, a specific DNA-binding protein that functions in genetic recombination as well as in transcriptional and translational control. The chain is Integration host factor subunit beta from Brucella melitensis biotype 2 (strain ATCC 23457).